Consider the following 168-residue polypeptide: MALLIEDKKQIVAEVSEIASTAFAAVVADYQGLTVEQLTTLRVEARKLGVATRVVRNTLAKRALQDTPFSILNDDLVGPTILAFSTSEDDMGAAARLFEEFAKTNKVFELKAAAFEGKLYQGADVSVIANLPNQEKALTMLASVLQAPVSKLGRLITALKEKNESEAA.

It belongs to the universal ribosomal protein uL10 family. Part of the ribosomal stalk of the 50S ribosomal subunit. The N-terminus interacts with L11 and the large rRNA to form the base of the stalk. The C-terminus forms an elongated spine to which L12 dimers bind in a sequential fashion forming a multimeric L10(L12)X complex.

In terms of biological role, forms part of the ribosomal stalk, playing a central role in the interaction of the ribosome with GTP-bound translation factors. The protein is Large ribosomal subunit protein uL10 of Acinetobacter baylyi (strain ATCC 33305 / BD413 / ADP1).